Reading from the N-terminus, the 295-residue chain is Cell shape-determining protein MreC (295 aa).

The first 34 residues, 1-34 (MPQFFLNKRLIILLISIIVLVALVGFSLRDRENA), serve as a signal peptide directing secretion. A coiled-coil region spans residues 66–112 (VVDLKNTYTENQHLKERLEELAQLESEVADLKKENKDLKESLDITDS). The segment at 276 to 295 (SAEAGTTDDDTTSSDTTGGQ) is disordered.

Belongs to the MreC family. As to quaternary structure, homooligomer of 24 subunits, arranged as 12 dimers.

In terms of biological role, involved in formation and maintenance of cell shape. The polypeptide is Cell shape-determining protein MreC (Listeria monocytogenes serovar 1/2a (strain ATCC BAA-679 / EGD-e)).